The sequence spans 155 residues: Small ribosomal subunit protein uS7 (155 aa).

The protein belongs to the universal ribosomal protein uS7 family. Part of the 30S ribosomal subunit. Contacts proteins S9 and S11.

Functionally, one of the primary rRNA binding proteins, it binds directly to 16S rRNA where it nucleates assembly of the head domain of the 30S subunit. Is located at the subunit interface close to the decoding center, probably blocks exit of the E-site tRNA. The polypeptide is Small ribosomal subunit protein uS7 (Thioalkalivibrio sulfidiphilus (strain HL-EbGR7)).